The sequence spans 422 residues: MEYLKIVGGKDISGSVEISGAKNAALPLIACTILGKNEITIGNLPNVVDINTFLKLILKLGGSFVKEENKVKINTSTINNTTATYDIVKTMRASILVLGPLLARFGHCEVSLPGGCAIGQRPVDLHLKALEQMGAKIEILQGYIKATAPNGLKGAKIVFDKVTVGGTENIVMAAALAHGVTTIINAAKEPEIVQLCEVLANSGVKIEGIGTSKIVIEGTGQKLIDIKPFDVIPDRIEAGTYMCAAAITNKKLKINKVIPLHLEAVISKLEEMNFEVLQDENSVTILPTNEIKPVNIITTEYPGFPTDMQAQFMALATQANGTSTIDERLFENRFMHVSELLRLGADIHLNGNIATINGKMGSLNGTDVMATDLRASSALVLAALVANGETNIHRIYHLDRGYENLEGKLSLIGADVKRSKED.

22–23 is a phosphoenolpyruvate binding site; it reads KN. Residue Arg92 coordinates UDP-N-acetyl-alpha-D-glucosamine. Catalysis depends on Cys116, which acts as the Proton donor. Residue Cys116 is modified to 2-(S-cysteinyl)pyruvic acid O-phosphothioketal. Residues 121–125, Asp307, and Leu329 each bind UDP-N-acetyl-alpha-D-glucosamine; that span reads RPVDL.

The protein belongs to the EPSP synthase family. MurA subfamily.

Its subcellular location is the cytoplasm. It catalyses the reaction phosphoenolpyruvate + UDP-N-acetyl-alpha-D-glucosamine = UDP-N-acetyl-3-O-(1-carboxyvinyl)-alpha-D-glucosamine + phosphate. The protein operates within cell wall biogenesis; peptidoglycan biosynthesis. Functionally, cell wall formation. Adds enolpyruvyl to UDP-N-acetylglucosamine. The chain is UDP-N-acetylglucosamine 1-carboxyvinyltransferase from Aliarcobacter butzleri (strain RM4018) (Arcobacter butzleri).